Here is a 160-residue protein sequence, read N- to C-terminus: SsrA-binding protein (160 aa).

It belongs to the SmpB family.

Its subcellular location is the cytoplasm. Its function is as follows. Required for rescue of stalled ribosomes mediated by trans-translation. Binds to transfer-messenger RNA (tmRNA), required for stable association of tmRNA with ribosomes. tmRNA and SmpB together mimic tRNA shape, replacing the anticodon stem-loop with SmpB. tmRNA is encoded by the ssrA gene; the 2 termini fold to resemble tRNA(Ala) and it encodes a 'tag peptide', a short internal open reading frame. During trans-translation Ala-aminoacylated tmRNA acts like a tRNA, entering the A-site of stalled ribosomes, displacing the stalled mRNA. The ribosome then switches to translate the ORF on the tmRNA; the nascent peptide is terminated with the 'tag peptide' encoded by the tmRNA and targeted for degradation. The ribosome is freed to recommence translation, which seems to be the essential function of trans-translation. This is SsrA-binding protein from Actinobacillus succinogenes (strain ATCC 55618 / DSM 22257 / CCUG 43843 / 130Z).